The following is a 648-amino-acid chain: Chaperone protein DnaK (648 aa).

Thr-200 carries the phosphothreonine; by autocatalysis modification. The interval 612-631 is disordered; it reads QAGAAGAAGAAEGAAQGGAQ.

It belongs to the heat shock protein 70 family.

In terms of biological role, acts as a chaperone. In Burkholderia multivorans (strain ATCC 17616 / 249), this protein is Chaperone protein DnaK.